We begin with the raw amino-acid sequence, 168 residues long: Photosystem I assembly protein Ycf3 (168 aa).

TPR repeat units lie at residues 35-68 (AFTY…EIDP), 72-105 (SYIL…NPFL), and 120-153 (GEQA…TPGN).

Belongs to the Ycf3 family.

The protein localises to the plastid. It localises to the chloroplast thylakoid membrane. Its function is as follows. Essential for the assembly of the photosystem I (PSI) complex. May act as a chaperone-like factor to guide the assembly of the PSI subunits. This chain is Photosystem I assembly protein Ycf3, found in Nicotiana sylvestris (Wood tobacco).